The sequence spans 211 residues: Pyridoxine/pyridoxamine 5'-phosphate oxidase (211 aa).

Residues 7–10 (RREY) and Lys-65 each bind substrate. FMN is bound by residues 60-65 (RIVLLK), 75-76 (YT), Arg-81, Lys-82, and Gln-104. Substrate-binding residues include Tyr-122, Arg-126, and Ser-130. FMN is bound by residues 139–140 (QS) and Trp-184. 190–192 (RLH) contacts substrate. Arg-194 contacts FMN.

It belongs to the pyridoxamine 5'-phosphate oxidase family. In terms of assembly, homodimer. The cofactor is FMN.

The catalysed reaction is pyridoxamine 5'-phosphate + O2 + H2O = pyridoxal 5'-phosphate + H2O2 + NH4(+). The enzyme catalyses pyridoxine 5'-phosphate + O2 = pyridoxal 5'-phosphate + H2O2. Its pathway is cofactor metabolism; pyridoxal 5'-phosphate salvage; pyridoxal 5'-phosphate from pyridoxamine 5'-phosphate: step 1/1. It participates in cofactor metabolism; pyridoxal 5'-phosphate salvage; pyridoxal 5'-phosphate from pyridoxine 5'-phosphate: step 1/1. Catalyzes the oxidation of either pyridoxine 5'-phosphate (PNP) or pyridoxamine 5'-phosphate (PMP) into pyridoxal 5'-phosphate (PLP). The polypeptide is Pyridoxine/pyridoxamine 5'-phosphate oxidase (Vibrio atlanticus (strain LGP32) (Vibrio splendidus (strain Mel32))).